A 192-amino-acid polypeptide reads, in one-letter code: MQMQTYKLVVVGGGGVGKSAITIQFIQSYFVTDYDPTIEDSYTKQCNIDDVPAKLDILDTAGQEEFSAMREQYMRSGEGFLLVFALNDHSSFDEIPKFQRQILRVKDRDEFPMLMVGNKCDLKHQQQVSLEEAQNTSRNLMIPYIECSAKLRVNVDQAFHELVRIVRKFQIAERPFIEQDYKKKGKRKCCLM.

12–19 is a GTP binding site; the sequence is GGGGVGKS. An Effector region motif is present at residues 34-42; it reads YDPTIEDSY. Cys-46 carries the S-palmitoyl cysteine lipid modification. GTP-binding positions include 59-63 and 118-121; these read DTAGQ and NKCD. 2 S-palmitoyl cysteine lipidation sites follow: Cys-120 and Cys-147. Residue Cys-189 is modified to Cysteine methyl ester. A lipid anchor (S-farnesyl cysteine) is attached at Cys-189. A propeptide spans 190–192 (removed in mature form); sequence CLM.

The protein belongs to the small GTPase superfamily. Ras family. Interacts with hzg.

The protein resides in the cell membrane. It catalyses the reaction GTP + H2O = GDP + phosphate + H(+). With respect to regulation, alternates between an inactive form bound to GDP and an active form bound to GTP. Activated by a guanine nucleotide-exchange factor (GEF) and inactivated by a GTPase-activating protein (GAP). May be involved in endocytic processes and/or other transport pathways mediated by vesicle trafficking. May interact functionally with ROP protein. Ras proteins bind GDP/GTP and possess intrinsic GTPase activity. The polypeptide is Ras-like protein 2 (Ras64B) (Drosophila melanogaster (Fruit fly)).